We begin with the raw amino-acid sequence, 503 residues long: Probable cytosol aminopeptidase (503 aa).

Mn(2+) is bound by residues K270 and D275. Residue K282 is part of the active site. Mn(2+) is bound by residues D293, D352, and E354. The active site involves R356.

This sequence belongs to the peptidase M17 family. The cofactor is Mn(2+).

Its subcellular location is the cytoplasm. It carries out the reaction Release of an N-terminal amino acid, Xaa-|-Yaa-, in which Xaa is preferably Leu, but may be other amino acids including Pro although not Arg or Lys, and Yaa may be Pro. Amino acid amides and methyl esters are also readily hydrolyzed, but rates on arylamides are exceedingly low.. The enzyme catalyses Release of an N-terminal amino acid, preferentially leucine, but not glutamic or aspartic acids.. Presumably involved in the processing and regular turnover of intracellular proteins. Catalyzes the removal of unsubstituted N-terminal amino acids from various peptides. This is Probable cytosol aminopeptidase from Citrobacter koseri (strain ATCC BAA-895 / CDC 4225-83 / SGSC4696).